Consider the following 268-residue polypeptide: MARLLRLCTWLVALGPGLLATVQAECSQDCAACSYRLVRPGDLNFLACTLECEGQLPSLKIWETCKDLLQVSKQELPQEGASSLRESGKQDESHLLSKKYGGFMKRYGGFMKKVDELYPVEPEEEANGGEILTKRYGGFMKKDAEDGDALANSSDLLKELLGTGDDRDRENHHQEGGDSDEGVSKRYGGFMRGLKRSPQVEDEAKELQKRYGGFMRRVGRPEWWMDYQKRYGGFLKRFAEFLPSDEEGESYSKEVPEMEKRYGGFMRF.

An N-terminal signal peptide occupies residues 1–24; that stretch reads MARLLRLCTWLVALGPGLLATVQA. 3 disulfide bridges follow: Cys26–Cys48, Cys30–Cys52, and Cys33–Cys65. Residues 163–184 are disordered; it reads TGDDRDRENHHQEGGDSDEGVS. Positions 164-176 are enriched in basic and acidic residues; sequence GDDRDRENHHQEG. 2 propeptides span residues 197-208 and 218-228; these read SPQVEDEAKELQ and VGRPEWWMDYQ. Ser252 bears the Phosphoserine mark.

It belongs to the opioid neuropeptide precursor family. In terms of processing, proenkephalin-A is cleaved by CTSL to generate Met-enkephalin. Post-translationally, processed and degraded by ACE. Probably cleaved by ACE. In terms of processing, processed by ACE to generate Met-enkephalin in the nucleus accumbens of the brain. Post-translationally, the N-terminal domain contains 6 conserved cysteines thought to be involved in disulfide bonding and/or processing.

The protein resides in the cytoplasmic vesicle. Its subcellular location is the secretory vesicle. It is found in the chromaffin granule lumen. The protein localises to the secreted. In terms of biological role, neuropeptide that competes with and mimic the effects of opiate drugs. They play a role in a number of physiologic functions, including pain perception and responses to stress. Its function is as follows. Met-enkephalin-Arg-Phe neuropeptide acts as a strong ligand of Mu-type opioid receptor OPRM1. Met-enkephalin-Arg-Phe-binding to OPRM1 in the nucleus accumbens of the brain increases activation of OPRM1, leading to long-term synaptic depression of glutamate release. Increases glutamate release in the striatum and decreases GABA concentration in the striatum. Functionally, increases glutamate release in the striatum. This Cavia porcellus (Guinea pig) protein is Proenkephalin-A (PENK).